A 790-amino-acid chain; its full sequence is Spermatogenesis-associated protein 20 (790 aa).

A compositionally biased stretch (basic residues) spans 1–19; sequence MSHHSSPPPKHKGEHKGHG. The segment at 1-67 is disordered; it reads MSHHSSPPPK…PPPAPPKTVN (67 aa). Position 5 is a phosphoserine (serine 5). Basic and acidic residues predominate over residues 23-36; it reads GSERGSSSRDKDRS. Serine 653 is modified (phosphoserine).

The protein localises to the secreted. May play a role in fertility regulation. This is Spermatogenesis-associated protein 20 (Spata20) from Mus musculus (Mouse).